Here is a 66-residue protein sequence, read N- to C-terminus: Large ribosomal subunit protein uL29 (66 aa).

It belongs to the universal ribosomal protein uL29 family.

The chain is Large ribosomal subunit protein uL29 from Rhizobium johnstonii (strain DSM 114642 / LMG 32736 / 3841) (Rhizobium leguminosarum bv. viciae).